The following is a 498-amino-acid chain: ATP synthase subunit beta, chloroplastic (498 aa).

172-179 (GGAGVGKT) contacts ATP.

The protein belongs to the ATPase alpha/beta chains family. In terms of assembly, F-type ATPases have 2 components, CF(1) - the catalytic core - and CF(0) - the membrane proton channel. CF(1) has five subunits: alpha(3), beta(3), gamma(1), delta(1), epsilon(1). CF(0) has four main subunits: a(1), b(1), b'(1) and c(9-12).

Its subcellular location is the plastid. It is found in the chloroplast thylakoid membrane. It catalyses the reaction ATP + H2O + 4 H(+)(in) = ADP + phosphate + 5 H(+)(out). Functionally, produces ATP from ADP in the presence of a proton gradient across the membrane. The catalytic sites are hosted primarily by the beta subunits. This chain is ATP synthase subunit beta, chloroplastic, found in Elaeis oleifera (American oil palm).